The following is a 445-amino-acid chain: MKEILDAIQSQTATSADFAALPLPDSYRAITVHKDETEMFAGLSTRDKDPRKSIHLDDVPVPELGPGEALVAVMASSVNYNSVWTSIFEPVSTFNFLERYGRLSDLSKRHDLPYHIIGSDLAGVVLRTGPGVNSWKPGDEVVAHCLSVELESSDGHNDTMLDPEQRIWGFETNFGGLAEIALVKSNQLMPKPDHLSWEEAAAPGLVNSTAYRQLVSRNGAGMKQGDNVLIWGASGGLGSYATQFALAGGANPICVVSSEQKADICRSMGAEAIIDRNAEGYKFWKDETTQDPKEWKRFGKRIREFTGGEDIDIVFEHPGRETFGASVYVTRKGGTITTCASTSGYMHEYDNRYLWMSLKRIIGSHFANYREAWEANRLVAKGKIHPTLSKVYSLEDTGQAAYDVHRNLHQGKVGVLALAPREGLGVRDEEKRAQHIDAINRFRNI.

Residue glutamate 149 coordinates Zn(2+).

This sequence belongs to the zinc-containing alcohol dehydrogenase family. Crotonyl-CoA carboxylase/reductase subfamily. Homodimer. Zn(2+) is required as a cofactor.

The catalysed reaction is butanoyl-CoA + NADP(+) = (2E)-butenoyl-CoA + NADPH + H(+). With respect to regulation, inhibited by NADPH at concentrations above 200 uM, by MgCl (30%), by ZnCl(2) (55%), and by CoCl, MnCl and CaCl (100%). Also inhibited by iodoacetamide, N-ethylmaleamide, the thiol group inhibitor beta-chloromercuribenzoate, palmitoyl-CoA and myristoyl-CoA. In terms of biological role, catalyzes the conversion of crotonyl-CoA to butyryl-CoA. It uses only NADP as electron donor. May have a role in providing butyryl-CoA as a starter unit for straight-chain fatty acid biosynthesis. This Streptomyces avermitilis (strain ATCC 31267 / DSM 46492 / JCM 5070 / NBRC 14893 / NCIMB 12804 / NRRL 8165 / MA-4680) protein is Crotonyl-CoA reductase (ccrA2).